A 128-amino-acid polypeptide reads, in one-letter code: Large ribosomal subunit protein bL20c (128 aa).

The protein belongs to the bacterial ribosomal protein bL20 family.

The protein localises to the plastid. Its subcellular location is the chloroplast. Functionally, binds directly to 23S ribosomal RNA and is necessary for the in vitro assembly process of the 50S ribosomal subunit. It is not involved in the protein synthesizing functions of that subunit. This Daucus carota (Wild carrot) protein is Large ribosomal subunit protein bL20c.